The following is a 134-amino-acid chain: Cytochrome b (134 aa).

The next 3 helical transmembrane spans lie at 33–53 (FGSLLGVCLATQILTGLFLAM), 77–98 (WILRYLHANGASMFFICLFLHV), and 113–133 (WNIGIILLFAVMATAFMGYVL). Residues His-83 and His-97 each coordinate heme b.

It belongs to the cytochrome b family. In terms of assembly, the cytochrome bc1 complex contains 11 subunits: 3 respiratory subunits (MT-CYB, CYC1 and UQCRFS1), 2 core proteins (UQCRC1 and UQCRC2) and 6 low-molecular weight proteins (UQCRH/QCR6, UQCRB/QCR7, UQCRQ/QCR8, UQCR10/QCR9, UQCR11/QCR10 and a cleavage product of UQCRFS1). This cytochrome bc1 complex then forms a dimer. Requires heme b as cofactor.

It is found in the mitochondrion inner membrane. Its function is as follows. Component of the ubiquinol-cytochrome c reductase complex (complex III or cytochrome b-c1 complex) that is part of the mitochondrial respiratory chain. The b-c1 complex mediates electron transfer from ubiquinol to cytochrome c. Contributes to the generation of a proton gradient across the mitochondrial membrane that is then used for ATP synthesis. The protein is Cytochrome b (MT-CYB) of Rhinolophus hipposideros (Lesser horseshoe bat).